Reading from the N-terminus, the 335-residue chain is DNA-directed RNA polymerase subunit alpha (335 aa).

Residues 1–231 (MVREKITVST…DLLIPFLHTK (231 aa)) form an alpha N-terminal domain (alpha-NTD) region. The segment at 263-335 (KKMALKSIFI…FVIDLPKNKF (73 aa)) is alpha C-terminal domain (alpha-CTD).

It belongs to the RNA polymerase alpha chain family. In plastids the minimal PEP RNA polymerase catalytic core is composed of four subunits: alpha, beta, beta', and beta''. When a (nuclear-encoded) sigma factor is associated with the core the holoenzyme is formed, which can initiate transcription.

The protein localises to the plastid. It is found in the chloroplast. The enzyme catalyses RNA(n) + a ribonucleoside 5'-triphosphate = RNA(n+1) + diphosphate. Functionally, DNA-dependent RNA polymerase catalyzes the transcription of DNA into RNA using the four ribonucleoside triphosphates as substrates. The sequence is that of DNA-directed RNA polymerase subunit alpha from Lactuca sativa (Garden lettuce).